Consider the following 175-residue polypeptide: uncharacterized protein (175 aa).

The Macro domain maps to 1 to 173 (MYKNIIKLIS…VYKEKYKKLL (173 aa)).

The protein belongs to the MacroD-type family.

This is an uncharacterized protein from Fusobacterium nucleatum subsp. nucleatum (strain ATCC 25586 / DSM 15643 / BCRC 10681 / CIP 101130 / JCM 8532 / KCTC 2640 / LMG 13131 / VPI 4355).